The following is a 336-amino-acid chain: Protein-glutamate methylesterase/protein-glutamine glutaminase 1 (336 aa).

Positions 2 to 119 constitute a Response regulatory domain; that stretch reads KIAIVNDMPM…GNAQEAAAPL (118 aa). 4-aspartylphosphate is present on D53. Positions 143–336 constitute a CheB-type methylesterase domain; that stretch reads PLRSGAPRQS…APRLLEIFAK (194 aa). Active-site residues include S159, H186, and D279.

The protein belongs to the CheB family. Post-translationally, phosphorylated by CheA. Phosphorylation of the N-terminal regulatory domain activates the methylesterase activity.

The protein resides in the cytoplasm. The enzyme catalyses [protein]-L-glutamate 5-O-methyl ester + H2O = L-glutamyl-[protein] + methanol + H(+). It carries out the reaction L-glutaminyl-[protein] + H2O = L-glutamyl-[protein] + NH4(+). Involved in chemotaxis. Part of a chemotaxis signal transduction system that modulates chemotaxis in response to various stimuli. Catalyzes the demethylation of specific methylglutamate residues introduced into the chemoreceptors (methyl-accepting chemotaxis proteins or MCP) by CheR. Also mediates the irreversible deamidation of specific glutamine residues to glutamic acid. This chain is Protein-glutamate methylesterase/protein-glutamine glutaminase 1, found in Pseudomonas fluorescens (strain ATCC BAA-477 / NRRL B-23932 / Pf-5).